A 313-amino-acid polypeptide reads, in one-letter code: Protein TIC 22-like, chloroplastic (313 aa).

The N-terminal 96 residues, M1–R96, are a transit peptide targeting the chloroplast.

The protein belongs to the Tic22 family.

The protein resides in the plastid. It localises to the chloroplast intermembrane space. Involved in protein precursor import into chloroplasts. The polypeptide is Protein TIC 22-like, chloroplastic (TIC22L) (Arabidopsis thaliana (Mouse-ear cress)).